The chain runs to 459 residues: Cysteine--tRNA ligase (459 aa).

Residue C29 participates in Zn(2+) binding. The 'HIGH' region signature appears at 31 to 41 (MTVYDLCHLGH). 3 residues coordinate Zn(2+): C213, H238, and E242. A 'KMSKS' region motif is present at residues 270 to 274 (KMSKS). K273 provides a ligand contact to ATP.

This sequence belongs to the class-I aminoacyl-tRNA synthetase family. In terms of assembly, monomer. Zn(2+) serves as cofactor.

It localises to the cytoplasm. The enzyme catalyses tRNA(Cys) + L-cysteine + ATP = L-cysteinyl-tRNA(Cys) + AMP + diphosphate. The polypeptide is Cysteine--tRNA ligase (Albidiferax ferrireducens (strain ATCC BAA-621 / DSM 15236 / T118) (Rhodoferax ferrireducens)).